Consider the following 486-residue polypeptide: MQLTDLTMLELAAKLAAGEASSEEATRASLARIQQVDPKVRAFLRVDEAGALAAARASDARRKSGSPASALDGVPLGLKDIFLTEGVETTAGSRILEGFVPPYDATVVRLLKEAGLPLVGKLNMDEFAMGSSNESSAFFPSHNPWDVSRTPGGSSGGSAAAVAAREVFGALGTDTGGSIRQPAALTNTVGLKPTYGRVSRFGVIAFASSLDQPGPMTRTVADAAALLQVIARPDAQDATSADAPVPDYSADLEAGVRGLKLGVPREYFTEGMDPEVEAAVREALREYERLGATLVDVSLPHTKYALATYYLIAPAEASSNLARYDGVRFGLRAKDARSLRDVYALTREQGFGAEVKRRIMLGTFALSSGYYDAHYLRAQKVRTLIREDFTRAFQQVDALLSPTSPVPAFKLGEKVEDPLSMYLMDIYTLPCNLAGLPGLSVPCGFTKAGLPVGLQILGRPFDEAGLLRIARAYEREHDFFRRSAPL.

Active-site charge relay system residues include K79 and S154. S178 serves as the catalytic Acyl-ester intermediate.

It belongs to the amidase family. GatA subfamily. Heterotrimer of A, B and C subunits.

It catalyses the reaction L-glutamyl-tRNA(Gln) + L-glutamine + ATP + H2O = L-glutaminyl-tRNA(Gln) + L-glutamate + ADP + phosphate + H(+). Its function is as follows. Allows the formation of correctly charged Gln-tRNA(Gln) through the transamidation of misacylated Glu-tRNA(Gln) in organisms which lack glutaminyl-tRNA synthetase. The reaction takes place in the presence of glutamine and ATP through an activated gamma-phospho-Glu-tRNA(Gln). The polypeptide is Glutamyl-tRNA(Gln) amidotransferase subunit A (Myxococcus xanthus (strain DK1622)).